We begin with the raw amino-acid sequence, 883 residues long: Ankyrin repeat and SAM domain-containing protein 6 (883 aa).

ANK repeat units follow at residues 8 to 37, 68 to 97, 101 to 130, 134 to 163, 181 to 210, 215 to 244, 282 to 312, 316 to 345, 350 to 379, and 383 to 414; these read PGLQLLLRACEQGDTDTARRLLEPGADPVA, AGNSALQLAAAGGHEPLVRFLLRRGASVNS, YGWSALMQAARCGHVSVAHLLLDHGADVNA, LGASVLTVASRGGHLGVVKLLLEAGAIVDH, LGITALMAAVQHGHEAVVRLLMEWGADPNH, VGWSPLMLAALLGKLNVAQQLVEKGANPDH, KRRPDIFYALKMGNFQLVKEIADEDPNHVNL, DGATPLMLAAVTGHLPLVQLLVEKHADMDK, HGWTALMQATYHGNKEIVKYLLNQGADVAL, and NGYTAFDLVMLLNDPDTELVRLLASVCMQVNK. Residues 30–50 are disordered; sequence EPGADPVAGPEAGAEPAGPEA. Disordered stretches follow at residues 414–439, 490–522, 566–773, and 852–883; these read KDRGRPSHRPPLPHSKARQPWSIPVL, MRAPPQDRTSHLGPPEAAHATKDSGPGNPRREK, SHTC…ITDE, and SFESSASNTRAPGNGPSMAGWTRPEETVSSRR. Basic and acidic residues predominate over residues 566–576; that stretch reads SHTCHNGKADP. Residues 607 to 630 are compositionally biased toward low complexity; the sequence is PSISRSPASPASSGSFNHSPHSSG. A compositionally biased stretch (gly residues) spans 631-640; it reads GASGIGGMSR. Ser-649 bears the Phosphoserine mark. Positions 649 to 661 are enriched in polar residues; it reads SGGSVDSVLSQIA. 2 stretches are compositionally biased toward low complexity: residues 687–711 and 720–737; these read SSSPPELPASLPSSGSGSSSGPSSS and PPSGTSATSKSTSPTLTP. Phosphoserine is present on residues Ser-732 and Ser-740. Residues 748–768 are compositionally biased toward low complexity; it reads SSVSSSSSHRQSKSSGGSSSG. The 64-residue stretch at 771–834 folds into the SAM domain; it reads TDEDELTGIL…LAAISELNAG (64 aa). Residues 852–862 show a composition bias toward polar residues; sequence SFESSASNTRA. Residues 874–883 are compositionally biased toward basic and acidic residues; the sequence is RPEETVSSRR.

Homooligomer. Interacts with NEK8. Central component of a complex containing at least ANKS6, INVS, NEK8 and NPHP3. ANKS6 may organize complex assembly by linking INVS and NPHP3 to NEK8 and INVS may target the complex to the proximal ciliary axoneme. Interacts (via SAM domain) with BICC1 (via KH domains) in an RNA-dependent manner. Interacts (via SAM domain) with ANKS3 (via SAM domain). Post-translationally, hydroxylated at Asn-129, most probably by HIF1AN. This hydroxylation results in decreased NEK8-binding. As to expression, expressed in kidney (at protein level).

It is found in the cell projection. The protein resides in the cilium. It localises to the cytoplasm. Its function is as follows. Required for renal function. This is Ankyrin repeat and SAM domain-containing protein 6 (Anks6) from Mus musculus (Mouse).